The following is a 497-amino-acid chain: MSAKFDISFANSASLENALAIVLQASGEAQAVAGASEADPGGVIERASKISGFSAKSMATLDVIAPQGSSADRLLVIGLGKPSKLVAHDWLRAGGTAAAHFKKADKVVIYLDAPGVEVSAEAAADFALGLLLRAYSFDAYKTKKKSDDEKTPKKVDVTIVTAAHKDAEKASAVSEAIAGGVILARDLVNLPPNVLGPVEFAEKAEELRKLGVDVEILGEKELKKLGMNALLGVAQGSARPPRLAVMQWNGGSKKDEPIAFVGKGVVFDTGGISLKPGLGMEDMKGDMGGAAAVTGLMHVLAARKAKANVIGVIGLVENMPDGNAQRPGDIVTSMSGQTIEIINTDAEGRLVLADALWYTKDRFNPKFMINLATLTGAITVALGNLQAGLFSNDDELATRLAEAGEATAEKLWRMPLGKDYDKIIDSKFADMKNSSGRLAGSVTAAQFLKRFVGETPWAHLDIAGTAMGSPLTEINQSWGSGYGVRLLNELVRAHYED.

Mn(2+)-binding residues include Lys-263 and Asp-268. Residue Lys-275 is part of the active site. Residues Asp-286, Asp-345, and Glu-347 each coordinate Mn(2+). Residue Arg-349 is part of the active site.

Belongs to the peptidase M17 family. Mn(2+) is required as a cofactor.

The protein resides in the cytoplasm. The enzyme catalyses Release of an N-terminal amino acid, Xaa-|-Yaa-, in which Xaa is preferably Leu, but may be other amino acids including Pro although not Arg or Lys, and Yaa may be Pro. Amino acid amides and methyl esters are also readily hydrolyzed, but rates on arylamides are exceedingly low.. It catalyses the reaction Release of an N-terminal amino acid, preferentially leucine, but not glutamic or aspartic acids.. Its function is as follows. Presumably involved in the processing and regular turnover of intracellular proteins. Catalyzes the removal of unsubstituted N-terminal amino acids from various peptides. The sequence is that of Probable cytosol aminopeptidase from Agrobacterium fabrum (strain C58 / ATCC 33970) (Agrobacterium tumefaciens (strain C58)).